Reading from the N-terminus, the 490-residue chain is Allantoin permease (490 aa).

12 helical membrane passes run 36–56 (IWMG…LIAI), 60–80 (PWQV…ALAL), 116–136 (AIMW…ILLL), 151–171 (ILGI…IHLL), 190–210 (LVYL…GGLG), 225–245 (TFWP…TLIL), 265–285 (FYGL…VTSG), 308–328 (YVIV…NVAA), 350–370 (GSFI…MESA), 373–393 (VYAF…VMMA), 425–445 (AFAA…VPVL), and 448–468 (LYDI…IVLM).

It belongs to the purine-cytosine permease (2.A.39) family.

Its subcellular location is the cell membrane. It carries out the reaction (S)-allantoin(in) + H(+)(in) = (S)-allantoin(out) + H(+)(out). Its function is as follows. Uptake of allantoin into the cell. Allantoin uptake is not dependent on sodium, and PucI is likely to be a proton-coupled symporter. Shows highest recognition for binding of allantoin, good recognition for binding of hydantoin, L-5-benzylhydantoin and 5-hydroxyhydantoin, and to a lesser extent for a range of nucleobases and nucleosides. The chain is Allantoin permease from Bacillus subtilis (strain 168).